A 277-amino-acid polypeptide reads, in one-letter code: Probable redox regulatory protein ML2435 (277 aa).

Belongs to the Rv0495c family.

Functionally, essential for maintaining intracellular redox homeostasis. This chain is Probable redox regulatory protein ML2435, found in Mycobacterium leprae (strain TN).